We begin with the raw amino-acid sequence, 105 residues long: UPF0166 protein aq_450 (105 aa).

Belongs to the UPF0166 family.

The protein is UPF0166 protein aq_450 of Aquifex aeolicus (strain VF5).